The chain runs to 215 residues: Glutathione S-transferase D4 (215 aa).

Residues 1–80 (MDFYYSPRSS…YLVEKYGKDD (80 aa)) enclose the GST N-terminal domain. Glutathione-binding positions include Ser9, 50-52 (HTI), and 64-66 (ESR). One can recognise a GST C-terminal domain in the interval 86–207 (DPQKRALINQ…KGLLQMKTMY (122 aa)).

The protein belongs to the GST superfamily. Delta family. In terms of assembly, homodimer.

It carries out the reaction RX + glutathione = an S-substituted glutathione + a halide anion + H(+). Conjugation of reduced glutathione to a wide number of exogenous and endogenous hydrophobic electrophiles. May be involved in detoxification. This is Glutathione S-transferase D4 from Drosophila melanogaster (Fruit fly).